A 308-amino-acid chain; its full sequence is uncharacterized protein (308 aa).

The next 5 membrane-spanning stretches (helical) occupy residues 46–66 (GISAGVVASVLVGCLLAGVLQ), 82–102 (LLAALLGAIAVGMLSWMLLWM), 159–179 (AAIGAALAGIGTAVVMAFLIF), 190–210 (FFQVMGTLLLIIVGGLVIGVL), and 271–291 (LYLFQAIAYGIFLSVIGSLYF).

Belongs to the oxidase-dependent Fe transporter (OFeT) (TC 9.A.10.1) family.

It is found in the cell membrane. This is an uncharacterized protein from Synechocystis sp. (strain ATCC 27184 / PCC 6803 / Kazusa).